We begin with the raw amino-acid sequence, 531 residues long: Tyrosine/DOPA decarboxylase 2 (531 aa).

The residue at position 319 (lysine 319) is an N6-(pyridoxal phosphate)lysine.

The protein belongs to the group II decarboxylase family. As to quaternary structure, homodimer. Requires pyridoxal 5'-phosphate as cofactor. In terms of tissue distribution, predominantly expressed in the roots and stems, while a lower level expression is seen in the sepals and carpels of fully expanded flowers.

The enzyme catalyses L-tyrosine + H(+) = tyramine + CO2. The catalysed reaction is L-dopa + H(+) = dopamine + CO2. It carries out the reaction 5-hydroxy-L-tryptophan + H(+) = serotonin + CO2. Its function is as follows. Marginally higher substrate specificity for L-DOPA over L-tyrosine. This chain is Tyrosine/DOPA decarboxylase 2 (TYDC2), found in Papaver somniferum (Opium poppy).